The following is a 130-amino-acid chain: Albumin-1 D (130 aa).

Positions 1–26 (MASVKLASLIVLFATLGMFLTKNVGA) are cleaved as a signal peptide. Cystine bridges form between cysteine 29–cysteine 46, cysteine 33–cysteine 48, and cysteine 41–cysteine 58. 2 propeptides span residues 64–69 (VFLKAN) and 123–130 (LLKSVSTA).

The C-terminal glycine may be removed from PA1b. As to expression, major component of both the cotyledons and embryonic axes of mature seeds.

In terms of biological role, PA1b binds to basic 7S globulin (BG) and stimulates its phosphorylation activity. Involved in the signal transduction system to regulate the growth and differentiation as a hormone peptide. Toxic to various insects through binding to a high affinity binding site in the insect gut. This Pisum sativum (Garden pea) protein is Albumin-1 D.